Consider the following 88-residue polypeptide: Putative defensin-like protein 264 (88 aa).

The N-terminal stretch at 1–26 (MEKMVLRKVVLLAILLSLSCLWVAKA) is a signal peptide. 3 disulfide bridges follow: C47-C65, C53-C70, and C57-C72.

Belongs to the DEFL family.

Its subcellular location is the secreted. The chain is Putative defensin-like protein 264 from Arabidopsis thaliana (Mouse-ear cress).